Consider the following 131-residue polypeptide: Small ribosomal subunit protein uS11 (131 aa).

Belongs to the universal ribosomal protein uS11 family. Part of the 30S ribosomal subunit. Interacts with proteins S7 and S18. Binds to IF-3.

Functionally, located on the platform of the 30S subunit, it bridges several disparate RNA helices of the 16S rRNA. Forms part of the Shine-Dalgarno cleft in the 70S ribosome. In Natranaerobius thermophilus (strain ATCC BAA-1301 / DSM 18059 / JW/NM-WN-LF), this protein is Small ribosomal subunit protein uS11.